Reading from the N-terminus, the 101-residue chain is Urease subunit beta (101 aa).

Belongs to the urease beta subunit family. In terms of assembly, heterotrimer of UreA (gamma), UreB (beta) and UreC (alpha) subunits. Three heterotrimers associate to form the active enzyme.

The protein localises to the cytoplasm. The enzyme catalyses urea + 2 H2O + H(+) = hydrogencarbonate + 2 NH4(+). It functions in the pathway nitrogen metabolism; urea degradation; CO(2) and NH(3) from urea (urease route): step 1/1. The protein is Urease subunit beta of Nostoc punctiforme (strain ATCC 29133 / PCC 73102).